Consider the following 225-residue polypeptide: UPF0758 protein MADE_1000235 (225 aa).

Residues 102 to 224 (VFNNVDDTKR…TISFAQRGLL (123 aa)) form the MPN domain. Residues histidine 173, histidine 175, and aspartate 186 each coordinate Zn(2+). The short motif at 173–186 (HNHPSGVAEPSHAD) is the JAMM motif element.

The protein belongs to the UPF0758 family.

This Alteromonas mediterranea (strain DSM 17117 / CIP 110805 / LMG 28347 / Deep ecotype) protein is UPF0758 protein MADE_1000235.